The chain runs to 263 residues: HTH-type transcriptional repressor NanR (263 aa).

Residues 1-22 (MGLMNAFDSQTEDSSPAIGRNL) are disordered. The HTH gntR-type domain maps to 30 to 98 (KKLSEMVEEE…NGERARVSRP (69 aa)). Positions 58–77 (ERELMAFFNVGRPSVREALA) form a DNA-binding region, H-T-H motif.

It belongs to the NanR family.

Functionally, transcriptional repressor that controls expression of the genes required for the catabolism of sialic acids. The polypeptide is HTH-type transcriptional repressor NanR (Shigella dysenteriae serotype 1 (strain Sd197)).